A 387-amino-acid polypeptide reads, in one-letter code: Formate-dependent phosphoribosylglycinamide formyltransferase (387 aa).

Residues 21–22 (EL) and glutamate 81 contribute to the N(1)-(5-phospho-beta-D-ribosyl)glycinamide site. ATP contacts are provided by residues arginine 113, lysine 154, 159 to 164 (SSGHGQ), 193 to 196 (EEFI), and glutamate 201. Residues 118-306 (TFAAEEVGVK…EFALHLRAVL (189 aa)) enclose the ATP-grasp domain. 2 residues coordinate Mg(2+): glutamate 265 and glutamate 277. Residues aspartate 284, lysine 352, and 359 to 360 (RR) each bind N(1)-(5-phospho-beta-D-ribosyl)glycinamide.

Belongs to the PurK/PurT family. Homodimer.

The catalysed reaction is N(1)-(5-phospho-beta-D-ribosyl)glycinamide + formate + ATP = N(2)-formyl-N(1)-(5-phospho-beta-D-ribosyl)glycinamide + ADP + phosphate + H(+). It functions in the pathway purine metabolism; IMP biosynthesis via de novo pathway; N(2)-formyl-N(1)-(5-phospho-D-ribosyl)glycinamide from N(1)-(5-phospho-D-ribosyl)glycinamide (formate route): step 1/1. In terms of biological role, involved in the de novo purine biosynthesis. Catalyzes the transfer of formate to 5-phospho-ribosyl-glycinamide (GAR), producing 5-phospho-ribosyl-N-formylglycinamide (FGAR). Formate is provided by PurU via hydrolysis of 10-formyl-tetrahydrofolate. In Wolinella succinogenes (strain ATCC 29543 / DSM 1740 / CCUG 13145 / JCM 31913 / LMG 7466 / NCTC 11488 / FDC 602W) (Vibrio succinogenes), this protein is Formate-dependent phosphoribosylglycinamide formyltransferase.